A 497-amino-acid chain; its full sequence is Guanosine-5'-triphosphate,3'-diphosphate pyrophosphatase (497 aa).

It belongs to the GppA/Ppx family. GppA subfamily.

It catalyses the reaction guanosine 3'-diphosphate 5'-triphosphate + H2O = guanosine 3',5'-bis(diphosphate) + phosphate + H(+). It participates in purine metabolism; ppGpp biosynthesis; ppGpp from GTP: step 2/2. Catalyzes the conversion of pppGpp to ppGpp. Guanosine pentaphosphate (pppGpp) is a cytoplasmic signaling molecule which together with ppGpp controls the 'stringent response', an adaptive process that allows bacteria to respond to amino acid starvation, resulting in the coordinated regulation of numerous cellular activities. This chain is Guanosine-5'-triphosphate,3'-diphosphate pyrophosphatase, found in Aliivibrio fischeri (strain ATCC 700601 / ES114) (Vibrio fischeri).